The sequence spans 298 residues: MELLNLKKQGIDIKEQIPLSRYTFTKTGGEAEYLAFPKTTDEVEKLVKVTQENKIPLTIIGNASNLIIRDGGIDGLVIILTELKNIEVNGNEVTADAGATIVDTAFTAANHGLSGMEFAAGIPGSIGGGVFMNAGAYGGEMQEAVKSVNVLTRAGEYKTYSNQEMDFSYRHSIIQENGDIVLSATFSLKPGNKLQILDHMDYLNALRRYKQPLEYPSCGSVFKRPKGHFVGPMIIKAGLQGKQIGGAQDSTKHAGFIVNKGGATATDYLDLIHLIQKVIKEKYDIDLHTEVRIIGKEN.

The 166-residue stretch at 26 to 191 (KTGGEAEYLA…LSATFSLKPG (166 aa)) folds into the FAD-binding PCMH-type domain. The active site involves Arg170. Ser220 (proton donor) is an active-site residue. Glu290 is a catalytic residue.

The protein belongs to the MurB family. FAD is required as a cofactor.

The protein resides in the cytoplasm. It carries out the reaction UDP-N-acetyl-alpha-D-muramate + NADP(+) = UDP-N-acetyl-3-O-(1-carboxyvinyl)-alpha-D-glucosamine + NADPH + H(+). It functions in the pathway cell wall biogenesis; peptidoglycan biosynthesis. Functionally, cell wall formation. The polypeptide is UDP-N-acetylenolpyruvoylglucosamine reductase (Lactobacillus acidophilus (strain ATCC 700396 / NCK56 / N2 / NCFM)).